A 291-amino-acid polypeptide reads, in one-letter code: Protease HtpX homolog (291 aa).

Transmembrane regions (helical) follow at residues 4-24 and 38-58; these read VVLFLFTNLAVMLVLSVSARV and MGMLLLFAALIGFGGSFISLL. Histidine 144 contacts Zn(2+). Glutamate 145 is an active-site residue. Residue histidine 148 coordinates Zn(2+). 2 helical membrane-spanning segments follow: residues 159–179 and 199–219; these read LIQGVLNTFVIFLSRVIAYAI and ISSIIFEIMFGILASVVVMYF. Glutamate 224 is a binding site for Zn(2+).

Belongs to the peptidase M48B family. It depends on Zn(2+) as a cofactor.

The protein localises to the cell inner membrane. The sequence is that of Protease HtpX homolog from Chlorobium phaeobacteroides (strain DSM 266 / SMG 266 / 2430).